The chain runs to 270 residues: Putative pyruvate, phosphate dikinase regulatory protein (270 aa).

Glycine 150–serine 157 contacts ADP.

It belongs to the pyruvate, phosphate/water dikinase regulatory protein family. PDRP subfamily.

The catalysed reaction is N(tele)-phospho-L-histidyl/L-threonyl-[pyruvate, phosphate dikinase] + ADP = N(tele)-phospho-L-histidyl/O-phospho-L-threonyl-[pyruvate, phosphate dikinase] + AMP + H(+). It carries out the reaction N(tele)-phospho-L-histidyl/O-phospho-L-threonyl-[pyruvate, phosphate dikinase] + phosphate + H(+) = N(tele)-phospho-L-histidyl/L-threonyl-[pyruvate, phosphate dikinase] + diphosphate. Bifunctional serine/threonine kinase and phosphorylase involved in the regulation of the pyruvate, phosphate dikinase (PPDK) by catalyzing its phosphorylation/dephosphorylation. This Neorickettsia sennetsu (strain ATCC VR-367 / Miyayama) (Ehrlichia sennetsu) protein is Putative pyruvate, phosphate dikinase regulatory protein.